A 448-amino-acid polypeptide reads, in one-letter code: Zinc finger and BTB domain-containing protein 14 (448 aa).

The BTB domain occupies 36-102 (CDIAIVVEDV…MYTAKISVKK (67 aa)). A Nuclear localization signal motif is present at residues 50-66 (HRCVLAACSTYFKKLFK). A disordered region spans residues 130–193 (VSSPEENTQS…QEDGKSPTTT (64 aa)). A compositionally biased stretch (acidic residues) spans 156–167 (DTQDDEVEEIGD). 5 C2H2-type zinc fingers span residues 275-302 (IVCQ…ADRP), 303-330 (FVCE…GYKP), 331-358 (YSCE…NERP), 359-386 (FACH…GEKP), and 387-415 (FVCG…ERKQ). Basic and acidic residues predominate over residues 404–415 (RHENNMHSERKQ). The segment at 404 to 425 (RHENNMHSERKQVTTANSIQSE) is disordered. A compositionally biased stretch (polar residues) spans 416 to 425 (VTTANSIQSE).

Belongs to the krueppel C2H2-type zinc-finger protein family. In terms of assembly, interacts with ZBTB21.

It is found in the nucleus. Transcriptional activator of the dopamine transporter (DAT), binding it's promoter at the consensus sequence 5'-CCTGCACAGTTCACGGA-3'. Binds to 5'-d(GCC)(n)-3' trinucleotide repeats in promoter regions and acts as a repressor of the FMR1 gene. Transcriptional repressor of MYC and thymidine kinase promoters. This is Zinc finger and BTB domain-containing protein 14 (ZBTB14) from Gallus gallus (Chicken).